The primary structure comprises 610 residues: MFQSILFLAFYGRPVFGSAAARDYACVNTAESRDCWKDGFNIETDYYGKEEAPEGKLVEYELTLSQQIISPDGYEMLGMVVNGQYPGPTIEADWGDTLRITVKNNFTENYNGTAVHWHGIRQKETNWLDGVPGVTQCPITPGDSQVYEFRVTQYGTSWYHSHYSLQYSNGAYGPIVIHGPSSANWDVDLGPWLLSDWYHDDAFALDHVGITTNRAAIPKSSLINGKGYYECDPTNDAKCTGTRDYYEVVLKQGTKYKFGIINTSTILTYTFWIDGHNFTIIAIDFVPIEPLTVDTLNVGIGQRYEIIIETNPDFDDDSSFWMHAQYCFINQTDIVDDKVGIVRYESAGSSDPPYINKSDYHLNFGCADPKPESLVPILKQQVGAQANPLAAEDYFRVGLGNFTWPDATNSTGSVFLWFLQKLPLYVNWSEPSVKKLTIDETADFPPNSRPIELDYETGQWVYFVIESDWDPAGAVDQYGQEIRVEPSVHPFHLHGHDFLILAQGLGKFTSDIQPNLDNPPRRDTVDVEPLGYVWIAFQIDNPGAWLFHCHIAFHSSDGIAIQFLEQPSKLKPIMEEAGVLGDFADRCNKWDDWYQAVNIPHNATQADSGV.

The N-terminal stretch at 1-20 is a signal peptide; that stretch reads MFQSILFLAFYGRPVFGSAA. Plastocyanin-like domains lie at 67-181 and 191-344; these read QIIS…HGPS and PWLL…IVRY. Residues Asn105, Asn111, Asn262, Asn277, Asn330, Asn356, Asn401, Asn409, Asn427, and Asn602 are each glycosylated (N-linked (GlcNAc...) asparagine). One can recognise a Plastocyanin-like 3 domain in the interval 425–568; it reads YVNWSEPSVK…IAIQFLEQPS (144 aa).

This sequence belongs to the multicopper oxidase family.

It participates in secondary metabolite biosynthesis. Functionally, oxidoreductase; part of the gene cluster that mediates the biosynthesis of pestheic acid, a diphenyl ether which is a biosynthetic precursor of the unique chloropupukeananes. The biosynthesis initiates from condensation of acetate and malonate units catalyzed by the non-reducing PKS ptaA. As the ptaA protein is TE/CLC domain-deficient, hydrolysis and Claisen cyclization of the polyketide could be catalyzed by ptaB containing a beta-lactamase domain. The ptaB protein might hydrolyze the thioester bond between the ACP of ptaA and the intermediate to release atrochrysone carboxylic acid, which is spontaneously dehydrated to form endocrocin anthrone. Endocrocin anthrone is then converted to endocrocin, catalyzed by the anthrone oxygenase ptaC. Spontaneous decarboxylation of endocrocin occurs to generate emodin. An O-methyltransferase (ptaH or ptaI) could methylate emodin to form physcion. PtaJ could then catalyze the oxidative cleavage of physcion, and rotation of the intermediate could then afford desmethylisosulochrin. PtaF, a putative NADH-dependent oxidoreductase, might also participate in the oxidative cleavage step. Desmethylisosulochrin is then transformed by another O-methyltransferase (ptaH or ptaI) to form isosulochrin. Chlorination of isosulochrin by ptaM in the cyclohexadienone B ring then produces chloroisosulochrin. PtaE is responsible for the oxidative coupling reactions of both benzophenones isosulouchrin and chloroisosulochrin to RES-1214-1 and pestheic acid respectively, regardless of chlorination. In Pestalotiopsis fici (strain W106-1 / CGMCC3.15140), this protein is Oxidoreductase ptaE.